We begin with the raw amino-acid sequence, 284 residues long: Acetyl-coenzyme A carboxylase carboxyl transferase subunit beta (284 aa).

A CoA carboxyltransferase N-terminal domain is found at 24 to 284 (GLWYKSPTGK…LDLILNNEVR (261 aa)).

The protein belongs to the AccD/PCCB family. As to quaternary structure, acetyl-CoA carboxylase is a heterohexamer composed of biotin carboxyl carrier protein (AccB), biotin carboxylase (AccC) and two subunits each of ACCase subunit alpha (AccA) and ACCase subunit beta (AccD).

The protein localises to the cytoplasm. The enzyme catalyses N(6)-carboxybiotinyl-L-lysyl-[protein] + acetyl-CoA = N(6)-biotinyl-L-lysyl-[protein] + malonyl-CoA. The protein operates within lipid metabolism; malonyl-CoA biosynthesis; malonyl-CoA from acetyl-CoA: step 1/1. Its function is as follows. Component of the acetyl coenzyme A carboxylase (ACC) complex. Biotin carboxylase (BC) catalyzes the carboxylation of biotin on its carrier protein (BCCP) and then the CO(2) group is transferred by the transcarboxylase to acetyl-CoA to form malonyl-CoA. This Flavobacterium psychrophilum (strain ATCC 49511 / DSM 21280 / CIP 103535 / JIP02/86) protein is Acetyl-coenzyme A carboxylase carboxyl transferase subunit beta.